A 238-amino-acid chain; its full sequence is 3-deoxy-D-manno-octulosonic acid kinase (238 aa).

Residue D167 is part of the active site.

The protein belongs to the protein kinase superfamily. KdkA/RfaP family.

It localises to the cell inner membrane. The catalysed reaction is an alpha-Kdo-(2-&gt;6)-lipid IVA + ATP = a 4-O-phospho-alpha-Kdo-(2-&gt;6)-lipid IVA + ADP + H(+). The protein operates within bacterial outer membrane biogenesis; LPS core biosynthesis. In terms of biological role, catalyzes the ATP-dependent phosphorylation of the 3-deoxy-D-manno-octulosonic acid (Kdo) residue in Kdo-lipid IV(A) at the 4-OH position. The polypeptide is 3-deoxy-D-manno-octulosonic acid kinase (Vibrio parahaemolyticus serotype O3:K6 (strain RIMD 2210633)).